A 283-amino-acid chain; its full sequence is DegV domain-containing protein BH3627 (283 aa).

The DegV domain occupies isoleucine 4–isoleucine 281. The hexadecanoate site is built by threonine 62 and serine 95.

In terms of biological role, may bind long-chain fatty acids, such as palmitate, and may play a role in lipid transport or fatty acid metabolism. The protein is DegV domain-containing protein BH3627 of Halalkalibacterium halodurans (strain ATCC BAA-125 / DSM 18197 / FERM 7344 / JCM 9153 / C-125) (Bacillus halodurans).